A 78-amino-acid chain; its full sequence is MSKVCQVTGKRRIVGHNVSHANNKTKRLFNPNLHERRFWVESENRWVRLKVSNHGLRVIDKCGIDAVLADIRKRGERV.

The protein belongs to the bacterial ribosomal protein bL28 family.

In Methylococcus capsulatus (strain ATCC 33009 / NCIMB 11132 / Bath), this protein is Large ribosomal subunit protein bL28.